Reading from the N-terminus, the 274-residue chain is Cell division protein FtsQ (274 aa).

A disordered region spans residues methionine 1–lysine 24. Residues methionine 1–lysine 33 lie on the Cytoplasmic side of the membrane. Over residues lysine 7 to lysine 21 the composition is skewed to basic residues. The helical transmembrane segment at phenylalanine 34–tyrosine 56 threads the bilayer. Topologically, residues asparagine 57–valine 274 are periplasmic. The POTRA domain occupies leucine 65 to arginine 133.

It belongs to the FtsQ/DivIB family. FtsQ subfamily.

The protein localises to the cell inner membrane. In terms of biological role, essential cell division protein. The chain is Cell division protein FtsQ from Geobacter sp. (strain M21).